Here is a 199-residue protein sequence, read N- to C-terminus: NADH-quinone oxidoreductase subunit C (199 aa).

Belongs to the complex I 30 kDa subunit family. In terms of assembly, NDH-1 is composed of 14 different subunits. Subunits NuoB, C, D, E, F, and G constitute the peripheral sector of the complex.

Its subcellular location is the cell inner membrane. It carries out the reaction a quinone + NADH + 5 H(+)(in) = a quinol + NAD(+) + 4 H(+)(out). Its function is as follows. NDH-1 shuttles electrons from NADH, via FMN and iron-sulfur (Fe-S) centers, to quinones in the respiratory chain. The immediate electron acceptor for the enzyme in this species is believed to be ubiquinone. Couples the redox reaction to proton translocation (for every two electrons transferred, four hydrogen ions are translocated across the cytoplasmic membrane), and thus conserves the redox energy in a proton gradient. The chain is NADH-quinone oxidoreductase subunit C from Cupriavidus taiwanensis (strain DSM 17343 / BCRC 17206 / CCUG 44338 / CIP 107171 / LMG 19424 / R1) (Ralstonia taiwanensis (strain LMG 19424)).